We begin with the raw amino-acid sequence, 1147 residues long: Multiple epidermal growth factor-like domains protein 10 (1147 aa).

A signal peptide spans 1 to 25; it reads MAISSSSCLGLICSLLCHWVGTASS. A necessary for interaction with AP2M1, self-assembly and formation of the irregular, mosaic-like adhesion pattern region spans residues 1-857; the sequence is MAISSSSCLG…ALPADSYQIG (857 aa). At 26-857 the chain is on the extracellular side; the sequence is LNLEDPNVCS…ALPADSYQIG (832 aa). The region spanning 30–107 is the EMI domain; the sequence is DPNVCSHWES…FYESRDMCVP (78 aa). Cystine bridges form between cysteine 34-cysteine 95, cysteine 60-cysteine 69, cysteine 94-cysteine 105, cysteine 109-cysteine 124, cysteine 126-cysteine 135, cysteine 148-cysteine 160, cysteine 154-cysteine 167, cysteine 169-cysteine 178, cysteine 191-cysteine 203, cysteine 197-cysteine 210, cysteine 212-cysteine 221, cysteine 234-cysteine 246, cysteine 240-cysteine 253, cysteine 255-cysteine 264, cysteine 281-cysteine 289, cysteine 283-cysteine 296, cysteine 298-cysteine 307, cysteine 320-cysteine 332, cysteine 326-cysteine 339, cysteine 341-cysteine 350, cysteine 409-cysteine 421, cysteine 415-cysteine 428, cysteine 430-cysteine 439, cysteine 456-cysteine 464, cysteine 458-cysteine 471, cysteine 473-cysteine 482, cysteine 495-cysteine 507, cysteine 501-cysteine 514, cysteine 516-cysteine 525, cysteine 542-cysteine 550, cysteine 544-cysteine 557, cysteine 559-cysteine 568, cysteine 581-cysteine 593, cysteine 587-cysteine 600, cysteine 602-cysteine 611, cysteine 669-cysteine 681, cysteine 675-cysteine 688, cysteine 690-cysteine 699, cysteine 716-cysteine 724, cysteine 718-cysteine 731, cysteine 733-cysteine 742, cysteine 755-cysteine 767, cysteine 761-cysteine 774, cysteine 776-cysteine 785, cysteine 802-cysteine 810, cysteine 804-cysteine 817, and cysteine 819-cysteine 828. 15 EGF-like domains span residues 101 to 136, 144 to 179, 187 to 222, 230 to 265, 278 to 308, 316 to 351, 405 to 440, 453 to 483, 491 to 526, 539 to 569, 577 to 612, 665 to 700, 713 to 743, 751 to 786, and 799 to 829; these read SRDM…TNCS, WGPH…WRCE, YGND…AFCE, HGPH…TVCG, SQEC…ERCQ, YGVR…ELCE, YGEA…TDCS, SSRC…VDCS, WGFG…AKCE, AERC…VHCD, WGPN…TTCQ, FGKN…SDCS, IHTC…LYCT, YGKD…RHCE, and RQIC…ARCD. N-linked (GlcNAc...) asparagine glycosylation occurs at asparagine 134. N-linked (GlcNAc...) asparagine glycosylation occurs at asparagine 496. A helical transmembrane segment spans residues 858–878; the sequence is AIAGIVVLVLVVLFLLALFII. Topologically, residues 879–1147 are cytoplasmic; it reads YRHKQKRKES…STSSSSSSSE (269 aa). Residues 945-1147 are necessary for formation of large intracellular vacuoles; it reads RDRMTIAKSK…STSSSSSSSE (203 aa). Position 1030 is a phosphotyrosine (tyrosine 1030). The tract at residues 1093–1147 is disordered; the sequence is HVTQDPYDLPKNSHIPCHYDLLPVRDSSSSPKREDGGGSNSTSSNSTSSSSSSSE. Positions 1132–1147 are enriched in low complexity; it reads NSTSSNSTSSSSSSSE.

Belongs to the MEGF family. As to quaternary structure, homomer. Interacts with GULP1 and ABCA1. Interacts with AP2M1. Does not interact with MEGF11. Binds with high affinity to complement C1q. Interacts (via the cytoplasmic domain) with NOTCH1 (via NICD domain). Post-translationally, ubiquitinated; mono- and polyubiquitinated forms are detected. In terms of processing, phosphorylated on tyrosine residues. Phosphorylation at Tyr-1030 may be important for muscle cell proliferation. In terms of tissue distribution, expressed in cerebellum (at protein level). Expressed in kidney, stellate cells of the cerebellum and macrophage cell lines.

The protein localises to the cell membrane. It localises to the cell projection. Its subcellular location is the phagocytic cup. Membrane receptor involved in phagocytosis by macrophages and astrocytes of apoptotic cells. Receptor for C1q, an eat-me signal, that binds phosphatidylserine expressed on the surface of apoptotic cells. Cooperates with ABCA1 within the process of engulfment. Promotes the formation of large intracellular vacuoles and may be responsible for the uptake of amyloid-beta peptides. Necessary for astrocyte-dependent apoptotic neuron clearance in the developing cerebellum. Plays a role in muscle cell proliferation, adhesion and motility. Is also an essential factor in the regulation of myogenesis. Controls the balance between skeletal muscle satellite cells proliferation and differentiation through regulation of the notch signaling pathway. May also function in the mosaic spacing of specific neuron subtypes in the retina through homotypic retinal neuron repulsion. Mosaics provide a mechanism to distribute each cell type evenly across the retina, ensuring that all parts of the visual field have access to a full set of processing elements. The polypeptide is Multiple epidermal growth factor-like domains protein 10 (Mus musculus (Mouse)).